A 161-amino-acid chain; its full sequence is Kininogen-2 (161 aa).

The N-terminal stretch at 1 to 23 (MRLWFCLSFFVVLCLEHFPGTLA) is a signal peptide. A disulfide bridge connects residues cysteine 150 and cysteine 156. Valine 160 carries the post-translational modification Valine amide.

Belongs to the bradykinin-related peptide family. As to expression, expressed by the skin glands.

The protein resides in the secreted. Its function is as follows. Inhibits ACE with a Ki of 1.6 uM, and targets B2 bradykinin receptor (BDKRB2). Provokes contraction of smooth muscle preparation (ileum). In vivo, induces an early hyperalgesic effects in living rats after intraplantar injection. Inhibits the bradykinin-induced in vitro relaxation of rat arterial smooth muscle and constriction of intestinal smooth muscle. May target bradykinin receptors (BDKRB). The chain is Kininogen-2 from Bombina orientalis (Oriental fire-bellied toad).